Here is a 244-residue protein sequence, read N- to C-terminus: 5-oxoprolinase subunit A (244 aa).

Belongs to the LamB/PxpA family. In terms of assembly, forms a complex composed of PxpA, PxpB and PxpC.

It carries out the reaction 5-oxo-L-proline + ATP + 2 H2O = L-glutamate + ADP + phosphate + H(+). Catalyzes the cleavage of 5-oxoproline to form L-glutamate coupled to the hydrolysis of ATP to ADP and inorganic phosphate. The polypeptide is 5-oxoprolinase subunit A (Salmonella arizonae (strain ATCC BAA-731 / CDC346-86 / RSK2980)).